Here is a 79-residue protein sequence, read N- to C-terminus: Cytochrome b (79 aa).

3 helical membrane-spanning segments follow: residues 1 to 7 (TALFLAM), 31 to 52 (WLIR…YLHI), and 67 to 79 (WNVG…LTMM). Heme b-binding residues include H37 and H51.

It belongs to the cytochrome b family. As to quaternary structure, the cytochrome bc1 complex contains 3 respiratory subunits (MT-CYB, CYC1 and UQCRFS1), 2 core proteins (UQCRC1 and UQCRC2) and probably 6 low-molecular weight proteins. Heme b serves as cofactor.

It localises to the mitochondrion inner membrane. Functionally, component of the ubiquinol-cytochrome c reductase complex (complex III or cytochrome b-c1 complex) that is part of the mitochondrial respiratory chain. The b-c1 complex mediates electron transfer from ubiquinol to cytochrome c. Contributes to the generation of a proton gradient across the mitochondrial membrane that is then used for ATP synthesis. The protein is Cytochrome b (mt-cyb) of Amphilophus citrinellus (Midas cichlid).